Here is a 272-residue protein sequence, read N- to C-terminus: Shikimate dehydrogenase (NADP(+)) (272 aa).

Shikimate is bound by residues 14–16 (SKS) and Thr61. Lys65 acts as the Proton acceptor in catalysis. Glu77 is an NADP(+) binding site. The shikimate site is built by Asn86 and Asp102. NADP(+)-binding positions include 126-130 (GAGGA), 149-154 (NRTVSR), and Met213. A shikimate-binding site is contributed by Tyr215. Gly237 contributes to the NADP(+) binding site.

This sequence belongs to the shikimate dehydrogenase family. In terms of assembly, homodimer.

It catalyses the reaction shikimate + NADP(+) = 3-dehydroshikimate + NADPH + H(+). Its pathway is metabolic intermediate biosynthesis; chorismate biosynthesis; chorismate from D-erythrose 4-phosphate and phosphoenolpyruvate: step 4/7. In terms of biological role, involved in the biosynthesis of the chorismate, which leads to the biosynthesis of aromatic amino acids. Catalyzes the reversible NADPH linked reduction of 3-dehydroshikimate (DHSA) to yield shikimate (SA). This is Shikimate dehydrogenase (NADP(+)) from Escherichia coli O81 (strain ED1a).